Reading from the N-terminus, the 238-residue chain is UDP-2,3-diacylglucosamine hydrolase (238 aa).

Residues Asp8, His10, Asp41, Asn78, and His113 each coordinate Mn(2+). 78–79 (NR) serves as a coordination point for substrate. Positions 121, 159, 163, 166, and 194 each coordinate substrate. Mn(2+) contacts are provided by His194 and His196.

Belongs to the LpxH family. The cofactor is Mn(2+).

The protein localises to the cell inner membrane. It carries out the reaction UDP-2-N,3-O-bis[(3R)-3-hydroxytetradecanoyl]-alpha-D-glucosamine + H2O = 2-N,3-O-bis[(3R)-3-hydroxytetradecanoyl]-alpha-D-glucosaminyl 1-phosphate + UMP + 2 H(+). The protein operates within glycolipid biosynthesis; lipid IV(A) biosynthesis; lipid IV(A) from (3R)-3-hydroxytetradecanoyl-[acyl-carrier-protein] and UDP-N-acetyl-alpha-D-glucosamine: step 4/6. Hydrolyzes the pyrophosphate bond of UDP-2,3-diacylglucosamine to yield 2,3-diacylglucosamine 1-phosphate (lipid X) and UMP by catalyzing the attack of water at the alpha-P atom. Involved in the biosynthesis of lipid A, a phosphorylated glycolipid that anchors the lipopolysaccharide to the outer membrane of the cell. This Shewanella pealeana (strain ATCC 700345 / ANG-SQ1) protein is UDP-2,3-diacylglucosamine hydrolase.